Reading from the N-terminus, the 478-residue chain is Proline--tRNA ligase (478 aa).

This sequence belongs to the class-II aminoacyl-tRNA synthetase family. ProS type 3 subfamily. In terms of assembly, homodimer.

It is found in the cytoplasm. The catalysed reaction is tRNA(Pro) + L-proline + ATP = L-prolyl-tRNA(Pro) + AMP + diphosphate. Its function is as follows. Catalyzes the attachment of proline to tRNA(Pro) in a two-step reaction: proline is first activated by ATP to form Pro-AMP and then transferred to the acceptor end of tRNA(Pro). The chain is Proline--tRNA ligase from Clostridium botulinum (strain Langeland / NCTC 10281 / Type F).